The chain runs to 495 residues: PXA domain protein 1 (495 aa).

The region spanning 1-174 (MAKLSSLLNP…KFIIYLSKAI (174 aa)) is the PXA domain. A run of 2 helical transmembrane segments spans residues 7–27 (LLNP…YSGI) and 235–255 (WFFF…FVAE). Polar residues-rich tracts occupy residues 402–419 (AVSS…QRSF) and 427–436 (DSQTPSENSA). The interval 402 to 436 (AVSSPTKANTNKSHQRSFSIPKATKDSQTPSENSA) is disordered. The helical transmembrane segment at 446-466 (AYSQIPVIPFFLPSDKLIMLV) threads the bilayer.

It localises to the endosome membrane. Its function is as follows. Required for required for normal vacuolar morphology and for vacuolar protein transport. Also required for endosome-to-Golgi protein transport. In Schizosaccharomyces pombe (strain 972 / ATCC 24843) (Fission yeast), this protein is PXA domain protein 1 (pxa1).